Here is a 356-residue protein sequence, read N- to C-terminus: tRNA N6-adenosine threonylcarbamoyltransferase (356 aa).

Fe cation is bound by residues histidine 115 and histidine 119. Residues 138–142 (LVSGG), aspartate 171, glycine 184, and asparagine 283 each bind substrate. Aspartate 311 contributes to the Fe cation binding site.

This sequence belongs to the KAE1 / TsaD family. Fe(2+) is required as a cofactor.

The protein resides in the cytoplasm. It catalyses the reaction L-threonylcarbamoyladenylate + adenosine(37) in tRNA = N(6)-L-threonylcarbamoyladenosine(37) in tRNA + AMP + H(+). Functionally, required for the formation of a threonylcarbamoyl group on adenosine at position 37 (t(6)A37) in tRNAs that read codons beginning with adenine. Is involved in the transfer of the threonylcarbamoyl moiety of threonylcarbamoyl-AMP (TC-AMP) to the N6 group of A37, together with TsaE and TsaB. TsaD likely plays a direct catalytic role in this reaction. This is tRNA N6-adenosine threonylcarbamoyltransferase from Prochlorococcus marinus (strain MIT 9303).